A 179-amino-acid polypeptide reads, in one-letter code: Putative 5'(3')-deoxyribonucleotidase (179 aa).

Residue D9 is the Nucleophile of the active site. Residues D9, D11, and D135 each coordinate Mg(2+). The Proton donor role is filled by D11.

It belongs to the 5'(3')-deoxyribonucleotidase family. Mg(2+) serves as cofactor.

In terms of biological role, dephosphorylates the 5' and 2'(3')-phosphates of deoxyribonucleotides. This Staphylococcus epidermidis (strain ATCC 12228 / FDA PCI 1200) protein is Putative 5'(3')-deoxyribonucleotidase.